Here is a 263-residue protein sequence, read N- to C-terminus: uncharacterized protein (263 aa).

This sequence belongs to the AtsA family.

The protein resides in the plastid. Its subcellular location is the chloroplast. This is an uncharacterized protein from Pyropia yezoensis (Susabi-nori).